The chain runs to 94 residues: PqqA binding protein (94 aa).

This sequence belongs to the PqqD family. In terms of assembly, monomer. Interacts with PqqE.

It functions in the pathway cofactor biosynthesis; pyrroloquinoline quinone biosynthesis. Functions as a PqqA binding protein and presents PqqA to PqqE, in the pyrroloquinoline quinone (PQQ) biosynthetic pathway. The protein is PqqA binding protein of Acinetobacter baumannii (strain SDF).